The primary structure comprises 110 residues: Hydrogenase maturation factor HypA (110 aa).

Position 2 (H2) interacts with Ni(2+). Zn(2+) contacts are provided by C70, C73, C86, and C89.

It belongs to the HypA/HybF family.

In terms of biological role, involved in the maturation of [NiFe] hydrogenases. Required for nickel insertion into the metal center of the hydrogenase. This is Hydrogenase maturation factor HypA from Geobacter sp. (strain M21).